The chain runs to 324 residues: Beta-ketoacyl-[acyl-carrier-protein] synthase III (324 aa).

Catalysis depends on residues Cys112 and His251. Residues 252–256 are ACP-binding; the sequence is QANLR. Residue Asn281 is part of the active site.

Belongs to the thiolase-like superfamily. FabH family. As to quaternary structure, homodimer.

The protein localises to the cytoplasm. It carries out the reaction malonyl-[ACP] + acetyl-CoA + H(+) = 3-oxobutanoyl-[ACP] + CO2 + CoA. It functions in the pathway lipid metabolism; fatty acid biosynthesis. Its function is as follows. Catalyzes the condensation reaction of fatty acid synthesis by the addition to an acyl acceptor of two carbons from malonyl-ACP. Catalyzes the first condensation reaction which initiates fatty acid synthesis and may therefore play a role in governing the total rate of fatty acid production. Possesses both acetoacetyl-ACP synthase and acetyl transacylase activities. Its substrate specificity determines the biosynthesis of branched-chain and/or straight-chain of fatty acids. The polypeptide is Beta-ketoacyl-[acyl-carrier-protein] synthase III (Clostridium perfringens (strain ATCC 13124 / DSM 756 / JCM 1290 / NCIMB 6125 / NCTC 8237 / Type A)).